We begin with the raw amino-acid sequence, 122 residues long: Large ribosomal subunit protein uL14 (122 aa).

This sequence belongs to the universal ribosomal protein uL14 family. In terms of assembly, part of the 50S ribosomal subunit. Forms a cluster with proteins L3 and L19. In the 70S ribosome, L14 and L19 interact and together make contacts with the 16S rRNA in bridges B5 and B8.

Its function is as follows. Binds to 23S rRNA. Forms part of two intersubunit bridges in the 70S ribosome. The polypeptide is Large ribosomal subunit protein uL14 (Chlorobium limicola (strain DSM 245 / NBRC 103803 / 6330)).